The chain runs to 325 residues: mRNA decay factor CTH1 (325 aa).

2 consecutive C3H1-type zinc fingers follow at residues 204 to 232 and 242 to 270; these read LYKT…HGLN and NYRT…HGDD. Positions 284–306 are disordered; sequence SKDTALTPLPTSLAPSNNDNITN. Polar residues predominate over residues 292–306; that stretch reads LPTSLAPSNNDNITN.

Functionally, binds to specific AU-rich elements (ARE) in the 3'-untranslated region of target mRNAs and promotes their degradation. In response to iron deficiency, promotes the decay of many mRNAs encoding proteins involved in iron-dependent pathways. Negatively regulates primarily iron-dependent mitochondrial processes including respiration and amino acid biosynthesis. This Saccharomyces cerevisiae (strain ATCC 204508 / S288c) (Baker's yeast) protein is mRNA decay factor CTH1 (CTH1).